A 246-amino-acid polypeptide reads, in one-letter code: uncharacterized protein (246 aa).

This is an uncharacterized protein from Dictyostelium discoideum (Social amoeba).